Consider the following 198-residue polypeptide: Probable chorismate pyruvate-lyase (198 aa).

Arg76, Leu114, and Glu172 together coordinate substrate.

The protein belongs to the UbiC family.

Its subcellular location is the cytoplasm. It catalyses the reaction chorismate = 4-hydroxybenzoate + pyruvate. It functions in the pathway cofactor biosynthesis; ubiquinone biosynthesis. Removes the pyruvyl group from chorismate, with concomitant aromatization of the ring, to provide 4-hydroxybenzoate (4HB) for the ubiquinone pathway. The protein is Probable chorismate pyruvate-lyase of Bordetella avium (strain 197N).